Reading from the N-terminus, the 639-residue chain is E3 ubiquitin-protein ligase RNF12 (639 aa).

3 disordered regions span residues 1-28 (MESADSAGKGSTEQSESQRQSQMDRLDR), 67-403 (RLQQ…ESER), and 467-534 (NDTD…GGVT). Low complexity predominate over residues 11–21 (STEQSESQRQS). Composition is skewed to polar residues over residues 110 to 138 (SVRQTGNTTRSGQRGNQSWRAVSRTNPNS) and 147 to 166 (INVNRTSGNPSMPSLEQSSE). Positions 213 to 228 (RSPDQRRTRARTDRSR) are enriched in basic and acidic residues. Over residues 244–253 (HSSSQTVDAS) the composition is skewed to polar residues. The segment covering 269 to 286 (SSQMQNSSSSNETEGSSR) has biased composition (low complexity). A compositionally biased stretch (polar residues) spans 290-302 (HITARQQALGTEG). 2 stretches are compositionally biased toward low complexity: residues 303 to 327 (QSQSQTQTQSQSQTQTQSQTQSQST) and 335 to 348 (SRSSSQPPQTDSSS). The segment covering 349-358 (NAETTGTGQR) has biased composition (polar residues). The segment covering 372 to 382 (RPGDYRQRDSI) has biased composition (basic and acidic residues). A compositionally biased stretch (polar residues) spans 383–399 (ANRTRSRSQTPNNTVTY). Composition is skewed to pro residues over residues 473–482 (NPTPVSPPAA) and 493–506 (PEPPAPIVEPPEPV). The segment at 585-626 (CSVCITEYTEGNKLRKLPCSHEYHVHCIDRWLSENSTCPICR) adopts an RING-type; atypical zinc-finger fold. The PDZ-binding signature appears at 636–639 (ESIV).

This sequence belongs to the RNF12 family. In terms of assembly, forms homodimers through the C-terminal region. The N-terminus interacts with the homeobox of LIM/homeobox factor lhx1/lim1, with lhx3/lim3 and lhx5/lim5, and with the N-terminus of ldb1.

Its subcellular location is the nucleus. It carries out the reaction S-ubiquitinyl-[E2 ubiquitin-conjugating enzyme]-L-cysteine + [acceptor protein]-L-lysine = [E2 ubiquitin-conjugating enzyme]-L-cysteine + N(6)-ubiquitinyl-[acceptor protein]-L-lysine.. It participates in protein modification; protein ubiquitination. Its function is as follows. Acts as an E3 ubiquitin-protein ligase specific for ldb1, mediating ubiquitination and proteasome-dependent degradation of excess ldb1 in a RING-dependent manner. Does not degrade ldb1 bound to lhx1/lim1, nor lim1 itself and thus contributes to the establishment of proper ldb1-lhx1/lim1 stoichiometry and the formation of a ldb1-lhx1/lim1 complex. Interferes with Spemann organizer function and suppresses secondary axis formation induced by ldb1 and lhx1/lim1. The sequence is that of E3 ubiquitin-protein ligase RNF12 from Xenopus tropicalis (Western clawed frog).